Here is a 621-residue protein sequence, read N- to C-terminus: Chaperone protein HtpG (621 aa).

The tract at residues 1–341 is a; substrate-binding; that stretch reads MSNQEYTFQT…SEDLPLNVSR (341 aa). The interval 342–547 is b; sequence EILQQNKILA…GDEQNAMMAN (206 aa). A c region spans residues 548-621; sequence FMRQMGQSVP…RLNSVLLKAL (74 aa).

The protein belongs to the heat shock protein 90 family. In terms of assembly, homodimer.

It is found in the cytoplasm. Molecular chaperone. Has ATPase activity. The protein is Chaperone protein HtpG of Helicobacter pylori (strain HPAG1).